We begin with the raw amino-acid sequence, 179 residues long: Inner membrane-spanning protein YciB (179 aa).

5 helical membrane passes run 22-42, 50-70, 76-96, 121-141, and 149-169; these read IYAATTALIVATAIVLIYTWI, MALITFVLVAVFGGLTVFFHN, WKVTVIYGLFAGALLFSQWVM, IAWAVFFILCGLANIYIAFWM, and FKVFGLTALTLIFTLLSGVYI.

Belongs to the YciB family.

It is found in the cell inner membrane. In terms of biological role, plays a role in cell envelope biogenesis, maintenance of cell envelope integrity and membrane homeostasis. In Enterobacter sp. (strain 638), this protein is Inner membrane-spanning protein YciB.